We begin with the raw amino-acid sequence, 983 residues long: Chaperone protein ClpB3, mitochondrial (983 aa).

A mitochondrion-targeting transit peptide spans 1 to 87; the sequence is MSRATAVSRL…LFHPTQAARY (87 aa). Positions 97-240 constitute a Clp R domain; it reads PGEFTEMAWE…KEAISAVRGS (144 aa). Repeat stretches follow at residues 100 to 165 and 177 to 240; these read FTEM…ISRQ and IGSS…VRGS. Positions 255 to 503 are i; the sequence is LEKYGIDMTE…KLKMEITSKP (249 aa). Residue 300-307 coordinates ATP; sequence GEPGVGKT. A coiled-coil region spans residues 504–627; the sequence is IELDEVDREI…QQSGKSMLRE (124 aa). The interval 629–820 is II; sequence VTDVDIAEIV…VIIMTSNIGS (192 aa). 703-710 is a binding site for ATP; it reads GPTGVGKT.

The protein belongs to the ClpA/ClpB family.

It localises to the mitochondrion. Functionally, molecular chaperone that may not be involved in heat stress response or tolerance. The protein is Chaperone protein ClpB3, mitochondrial (CLPB3) of Oryza sativa subsp. japonica (Rice).